The following is a 279-amino-acid chain: Bifunctional protein FolD (279 aa).

NADP(+) contacts are provided by residues 158 to 160 (GRS), S183, and I224.

The protein belongs to the tetrahydrofolate dehydrogenase/cyclohydrolase family. As to quaternary structure, homodimer.

The enzyme catalyses (6R)-5,10-methylene-5,6,7,8-tetrahydrofolate + NADP(+) = (6R)-5,10-methenyltetrahydrofolate + NADPH. It carries out the reaction (6R)-5,10-methenyltetrahydrofolate + H2O = (6R)-10-formyltetrahydrofolate + H(+). The protein operates within one-carbon metabolism; tetrahydrofolate interconversion. Functionally, catalyzes the oxidation of 5,10-methylenetetrahydrofolate to 5,10-methenyltetrahydrofolate and then the hydrolysis of 5,10-methenyltetrahydrofolate to 10-formyltetrahydrofolate. This chain is Bifunctional protein FolD, found in Caldicellulosiruptor saccharolyticus (strain ATCC 43494 / DSM 8903 / Tp8T 6331).